The primary structure comprises 625 residues: Vacuolar-sorting receptor 2 (625 aa).

A signal peptide spans 1 to 19 (MRTTNVWLVVIVWVTVGWS). Over 20–567 (SCTGRFVVEK…INRDARGDFS (548 aa)) the chain is Lumenal. The PA domain maps to 55–167 (QYGGSMSGAV…SLGSAIKTAI (113 aa)). Asparagine 147, asparagine 293, and asparagine 433 each carry an N-linked (GlcNAc...) asparagine glycan. 2 EGF-like domains span residues 415-465 (ETNE…THCE) and 468-515 (GALR…KECK). 7 disulfide bridges follow: cysteine 419-cysteine 437, cysteine 426-cysteine 446, cysteine 448-cysteine 464, cysteine 472-cysteine 492, cysteine 479-cysteine 500, cysteine 502-cysteine 514, and cysteine 544-cysteine 557. Residues 516–558 (DVNECEEKTACQCRDCKCKNTWGSYECSCSGSLLYIREHDICI) form the EGF-like 3; calcium-binding domain. Residues 568-588 (WGVIWIIIMGLGAAALGAYTV) traverse the membrane as a helical segment. Residues 589–625 (YKYRIRTYMDSEIRAIMAQYMPLDNNPNTQLSSQLEL) are Cytoplasmic-facing. The short motif at 608 to 611 (YMPL) is the Tyrosine-based internalization motif element.

The protein belongs to the VSR (BP-80) family. As to expression, expressed only in flowers.

It is found in the membrane. The protein resides in the golgi apparatus membrane. The protein localises to the cytoplasmic vesicle. Its subcellular location is the clathrin-coated vesicle membrane. It localises to the prevacuolar compartment membrane. Functionally, vacuolar-sorting receptor (VSR) involved in clathrin-coated vesicles sorting from Golgi apparatus to vacuoles. This Arabidopsis thaliana (Mouse-ear cress) protein is Vacuolar-sorting receptor 2.